A 166-amino-acid chain; its full sequence is Large ribosomal subunit protein uL10 (166 aa).

This sequence belongs to the universal ribosomal protein uL10 family. As to quaternary structure, part of the ribosomal stalk of the 50S ribosomal subunit. The N-terminus interacts with L11 and the large rRNA to form the base of the stalk. The C-terminus forms an elongated spine to which L12 dimers bind in a sequential fashion forming a multimeric L10(L12)X complex.

Its function is as follows. Forms part of the ribosomal stalk, playing a central role in the interaction of the ribosome with GTP-bound translation factors. This Streptococcus agalactiae serotype III (strain NEM316) protein is Large ribosomal subunit protein uL10.